A 189-amino-acid chain; its full sequence is dCTP deaminase (189 aa).

DCTP is bound by residues Lys-112 to Arg-117, Thr-136 to Glu-138, Gln-157, Tyr-171, and Gln-181. Glu-138 functions as the Proton donor/acceptor in the catalytic mechanism.

The protein belongs to the dCTP deaminase family. Homotrimer.

It catalyses the reaction dCTP + H2O + H(+) = dUTP + NH4(+). It functions in the pathway pyrimidine metabolism; dUMP biosynthesis; dUMP from dCTP (dUTP route): step 1/2. Its function is as follows. Catalyzes the deamination of dCTP to dUTP. The polypeptide is dCTP deaminase (Xanthomonas oryzae pv. oryzae (strain MAFF 311018)).